Here is a 237-residue protein sequence, read N- to C-terminus: Sugar fermentation stimulation protein homolog (237 aa).

Belongs to the SfsA family.

This is Sugar fermentation stimulation protein homolog from Pseudomonas putida (strain ATCC 47054 / DSM 6125 / CFBP 8728 / NCIMB 11950 / KT2440).